The following is a 130-amino-acid chain: uncharacterized protein (130 aa).

Residues 8-28 (PFILMIIVLGLFLVSIGGYYY) form a helical membrane-spanning segment.

It localises to the membrane. This is an uncharacterized protein from Bacillus anthracis.